Reading from the N-terminus, the 714-residue chain is Polyribonucleotide nucleotidyltransferase (714 aa).

Residues Asp488 and Asp494 each contribute to the Mg(2+) site. A KH domain is found at 555–614; it reads PRIEVMNIPVDKIREVIGSGGKVIREIVEKTGAKINIDDDGTVKIASASGKEIEAARKWI. The 69-residue stretch at 624 to 692 folds into the S1 motif domain; sequence GQVYEGTVVK…ERGKVRLSMK (69 aa).

It belongs to the polyribonucleotide nucleotidyltransferase family. Requires Mg(2+) as cofactor.

It localises to the cytoplasm. It catalyses the reaction RNA(n+1) + phosphate = RNA(n) + a ribonucleoside 5'-diphosphate. In terms of biological role, involved in mRNA degradation. Catalyzes the phosphorolysis of single-stranded polyribonucleotides processively in the 3'- to 5'-direction. The chain is Polyribonucleotide nucleotidyltransferase from Sinorhizobium medicae (strain WSM419) (Ensifer medicae).